Consider the following 79-residue polypeptide: UPF0349 protein BCE33L4669 (79 aa).

Belongs to the UPF0349 family.

This Bacillus cereus (strain ZK / E33L) protein is UPF0349 protein BCE33L4669.